Reading from the N-terminus, the 683-residue chain is Heat shock protein homolog ECU03_0520 (683 aa).

The protein belongs to the heat shock protein 70 family.

The protein localises to the cytoplasm. This Encephalitozoon cuniculi (strain GB-M1) (Microsporidian parasite) protein is Heat shock protein homolog ECU03_0520.